Reading from the N-terminus, the 148-residue chain is FAD synthase (148 aa).

ATP contacts are provided by residues 14–15 (TF), 19–22 (HPGH), and aspartate 97.

The protein belongs to the archaeal FAD synthase family. As to quaternary structure, homodimer. It depends on a divalent metal cation as a cofactor.

It catalyses the reaction FMN + ATP + H(+) = FAD + diphosphate. It functions in the pathway cofactor biosynthesis; FAD biosynthesis; FAD from FMN: step 1/1. In terms of biological role, catalyzes the transfer of the AMP portion of ATP to flavin mononucleotide (FMN) to produce flavin adenine dinucleotide (FAD) coenzyme. The polypeptide is FAD synthase (Natrialba magadii (strain ATCC 43099 / DSM 3394 / CCM 3739 / CIP 104546 / IAM 13178 / JCM 8861 / NBRC 102185 / NCIMB 2190 / MS3) (Natronobacterium magadii)).